The primary structure comprises 515 residues: E3 ubiquitin-protein ligase RNF38 (515 aa).

The short motif at 57–71 is the Bipartite nuclear localization signal 1 element; that stretch reads DSPSPKRQRLSHSVF. A disordered region spans residues 73-141; it reads YTSASPAPSP…LSRHNSISQD (69 aa). A compositionally biased stretch (polar residues) spans 89–104; it reads MTSNRQPPSVRPSQHH. The short motif at 115 to 131 is the Bipartite nuclear localization signal 2 element; sequence RNRRSPPVRRQRGRRDR. The segment covering 115 to 134 has biased composition (basic residues); sequence RNRRSPPVRRQRGRRDRLSR. The RING-type zinc finger occupies 463–504; the sequence is CVVCMCDFESRQLLRVLPCNHEFHAKCVDKWLKANRTCPICR.

In terms of tissue distribution, widely expressed with highest levels in testis.

The protein resides in the nucleus. The enzyme catalyses S-ubiquitinyl-[E2 ubiquitin-conjugating enzyme]-L-cysteine + [acceptor protein]-L-lysine = [E2 ubiquitin-conjugating enzyme]-L-cysteine + N(6)-ubiquitinyl-[acceptor protein]-L-lysine.. Its pathway is protein modification; protein ubiquitination. Its function is as follows. Acts as an E3 ubiquitin-protein ligase able to ubiquitinate p53/TP53 which promotes its relocalization to discrete foci associated with PML nuclear bodies. Exhibits preference for UBE2D2 as a E2 enzyme. In Homo sapiens (Human), this protein is E3 ubiquitin-protein ligase RNF38.